Here is a 158-residue protein sequence, read N- to C-terminus: NAD(P)H-quinone oxidoreductase subunit J, chloroplastic (158 aa).

It belongs to the complex I 30 kDa subunit family. In terms of assembly, NDH is composed of at least 16 different subunits, 5 of which are encoded in the nucleus.

It is found in the plastid. Its subcellular location is the chloroplast thylakoid membrane. The catalysed reaction is a plastoquinone + NADH + (n+1) H(+)(in) = a plastoquinol + NAD(+) + n H(+)(out). The enzyme catalyses a plastoquinone + NADPH + (n+1) H(+)(in) = a plastoquinol + NADP(+) + n H(+)(out). NDH shuttles electrons from NAD(P)H:plastoquinone, via FMN and iron-sulfur (Fe-S) centers, to quinones in the photosynthetic chain and possibly in a chloroplast respiratory chain. The immediate electron acceptor for the enzyme in this species is believed to be plastoquinone. Couples the redox reaction to proton translocation, and thus conserves the redox energy in a proton gradient. This Panax ginseng (Korean ginseng) protein is NAD(P)H-quinone oxidoreductase subunit J, chloroplastic.